The primary structure comprises 484 residues: tRNA sulfurtransferase (484 aa).

Residues 63–167 (QAFGERLACI…GDKLYMVTKR (105 aa)) enclose the THUMP domain. ATP is bound by residues 185-186 (LI), Lys-267, Gly-289, and Gln-298. Residues Cys-346 and Cys-458 are joined by a disulfide bond. The Rhodanese domain maps to 406–484 (IDTNEVVIDI…GYHNVKVYRP (79 aa)). Cys-458 acts as the Cysteine persulfide intermediate in catalysis.

Belongs to the ThiI family.

It localises to the cytoplasm. The enzyme catalyses [ThiI sulfur-carrier protein]-S-sulfanyl-L-cysteine + a uridine in tRNA + 2 reduced [2Fe-2S]-[ferredoxin] + ATP + H(+) = [ThiI sulfur-carrier protein]-L-cysteine + a 4-thiouridine in tRNA + 2 oxidized [2Fe-2S]-[ferredoxin] + AMP + diphosphate. It catalyses the reaction [ThiS sulfur-carrier protein]-C-terminal Gly-Gly-AMP + S-sulfanyl-L-cysteinyl-[cysteine desulfurase] + AH2 = [ThiS sulfur-carrier protein]-C-terminal-Gly-aminoethanethioate + L-cysteinyl-[cysteine desulfurase] + A + AMP + 2 H(+). Its pathway is cofactor biosynthesis; thiamine diphosphate biosynthesis. Catalyzes the ATP-dependent transfer of a sulfur to tRNA to produce 4-thiouridine in position 8 of tRNAs, which functions as a near-UV photosensor. Also catalyzes the transfer of sulfur to the sulfur carrier protein ThiS, forming ThiS-thiocarboxylate. This is a step in the synthesis of thiazole, in the thiamine biosynthesis pathway. The sulfur is donated as persulfide by IscS. The sequence is that of tRNA sulfurtransferase from Shewanella sp. (strain MR-7).